Consider the following 257-residue polypeptide: Glycerol-3-phosphate acyltransferase (257 aa).

The next 6 membrane-spanning stretches (helical) occupy residues 7–27 (IVMA…LIGS), 66–86 (ILTL…TYII), 104–124 (AILV…PIFF), 140–160 (ITVD…ILLI), 164–184 (MSLS…VPGI), and 203–223 (YVIK…SLLI).

The protein belongs to the PlsY family. In terms of assembly, probably interacts with PlsX.

It is found in the cell membrane. It catalyses the reaction an acyl phosphate + sn-glycerol 3-phosphate = a 1-acyl-sn-glycero-3-phosphate + phosphate. It participates in lipid metabolism; phospholipid metabolism. Functionally, catalyzes the transfer of an acyl group from acyl-phosphate (acyl-PO(4)) to glycerol-3-phosphate (G3P) to form lysophosphatidic acid (LPA). This enzyme utilizes acyl-phosphate as fatty acyl donor, but not acyl-CoA or acyl-ACP. In Ureaplasma parvum serovar 3 (strain ATCC 700970), this protein is Glycerol-3-phosphate acyltransferase.